A 570-amino-acid polypeptide reads, in one-letter code: Sulfite reductase [NADPH] hemoprotein beta-component (570 aa).

Cys434, Cys440, Cys479, and Cys483 together coordinate [4Fe-4S] cluster. Cys483 provides a ligand contact to siroheme.

It belongs to the nitrite and sulfite reductase 4Fe-4S domain family. In terms of assembly, alpha(8)-beta(8). The alpha component is a flavoprotein, the beta component is a hemoprotein. The cofactor is siroheme. It depends on [4Fe-4S] cluster as a cofactor.

It catalyses the reaction hydrogen sulfide + 3 NADP(+) + 3 H2O = sulfite + 3 NADPH + 4 H(+). It functions in the pathway sulfur metabolism; hydrogen sulfide biosynthesis; hydrogen sulfide from sulfite (NADPH route): step 1/1. Component of the sulfite reductase complex that catalyzes the 6-electron reduction of sulfite to sulfide. This is one of several activities required for the biosynthesis of L-cysteine from sulfate. The polypeptide is Sulfite reductase [NADPH] hemoprotein beta-component (Enterobacter sp. (strain 638)).